The chain runs to 420 residues: Tyrosine--tRNA ligase (420 aa).

An L-tyrosine-binding site is contributed by Tyr-36. The short motif at 41-50 (PTADSLHIGH) is the 'HIGH' region element. Residues Tyr-170 and Gln-174 each coordinate L-tyrosine. Residues 231–235 (KFGKS) carry the 'KMSKS' region motif. Lys-234 serves as a coordination point for ATP. An S4 RNA-binding domain is found at 353-420 (SNIIDVLIET…KKKYFMVNYK (68 aa)).

This sequence belongs to the class-I aminoacyl-tRNA synthetase family. TyrS type 1 subfamily. In terms of assembly, homodimer.

Its subcellular location is the cytoplasm. It catalyses the reaction tRNA(Tyr) + L-tyrosine + ATP = L-tyrosyl-tRNA(Tyr) + AMP + diphosphate + H(+). Its function is as follows. Catalyzes the attachment of tyrosine to tRNA(Tyr) in a two-step reaction: tyrosine is first activated by ATP to form Tyr-AMP and then transferred to the acceptor end of tRNA(Tyr). This chain is Tyrosine--tRNA ligase, found in Staphylococcus haemolyticus (strain JCSC1435).